Consider the following 621-residue polypeptide: Chaperone protein HtpG (621 aa).

An a; substrate-binding region spans residues 1-341 (MSNQEYTFQT…SEDLPLNVSR (341 aa)). The segment at 342–547 (EILQQNKILA…GDEQNAMMAN (206 aa)) is b. The tract at residues 548–621 (FMRQMGQSVP…RLNSVLLKAL (74 aa)) is c.

It belongs to the heat shock protein 90 family. As to quaternary structure, homodimer.

The protein localises to the cytoplasm. Its function is as follows. Molecular chaperone. Has ATPase activity. The chain is Chaperone protein HtpG from Helicobacter pylori (strain HPAG1).